The chain runs to 429 residues: Light-independent protochlorophyllide reductase subunit N (429 aa).

Cysteine 32, cysteine 57, and cysteine 118 together coordinate [4Fe-4S] cluster.

Belongs to the BchN/ChlN family. Protochlorophyllide reductase is composed of three subunits; BchL, BchN and BchB. Forms a heterotetramer of two BchB and two BchN subunits. [4Fe-4S] cluster serves as cofactor.

The enzyme catalyses chlorophyllide a + oxidized 2[4Fe-4S]-[ferredoxin] + 2 ADP + 2 phosphate = protochlorophyllide a + reduced 2[4Fe-4S]-[ferredoxin] + 2 ATP + 2 H2O. It participates in porphyrin-containing compound metabolism; bacteriochlorophyll biosynthesis (light-independent). In terms of biological role, component of the dark-operative protochlorophyllide reductase (DPOR) that uses Mg-ATP and reduced ferredoxin to reduce ring D of protochlorophyllide (Pchlide) to form chlorophyllide a (Chlide). This reaction is light-independent. The NB-protein (BchN-BchB) is the catalytic component of the complex. This chain is Light-independent protochlorophyllide reductase subunit N, found in Rhodopseudomonas palustris (strain ATCC BAA-98 / CGA009).